The chain runs to 330 residues: Phosphate acyltransferase (330 aa).

It belongs to the PlsX family. In terms of assembly, homodimer. Probably interacts with PlsY.

It localises to the cytoplasm. The enzyme catalyses a fatty acyl-[ACP] + phosphate = an acyl phosphate + holo-[ACP]. Its pathway is lipid metabolism; phospholipid metabolism. Functionally, catalyzes the reversible formation of acyl-phosphate (acyl-PO(4)) from acyl-[acyl-carrier-protein] (acyl-ACP). This enzyme utilizes acyl-ACP as fatty acyl donor, but not acyl-CoA. This Streptococcus pneumoniae (strain P1031) protein is Phosphate acyltransferase.